The following is a 98-amino-acid chain: Protein S100-A13 (98 aa).

One can recognise an EF-hand domain in the interval Thr-18–Val-53. Ca(2+) contacts are provided by Ser-32, Glu-37, Asp-64, Asn-66, Asp-68, Glu-70, and Glu-75. Phosphoserine is present on Ser-32.

It belongs to the S-100 family. In terms of assembly, homodimer. Part of a copper-dependent multiprotein complex containing S100A13, FGF1 and SYT1. Interacts with FGF1 and SYT1. Interacts with IL1A.

Its subcellular location is the cytoplasm. It is found in the secreted. In terms of biological role, plays a role in the export of proteins that lack a signal peptide and are secreted by an alternative pathway. Binds two calcium ions per subunit. Binds one copper ion. Binding of one copper ion does not interfere with calcium binding. Required for the copper-dependent stress-induced export of IL1A and FGF1. The calcium-free protein binds to lipid vesicles containing phosphatidylserine, but not to vesicles containing phosphatidylcholine. The sequence is that of Protein S100-A13 (S100A13) from Bos taurus (Bovine).